Consider the following 125-residue polypeptide: Bublin coiled-coil protein (125 aa).

Positions 46–95 form a coiled coil; it reads IRKLDTQLDHLNDYMSKMEERLKAHNDRMMETLKQQKEEREKRRRSFHER. The tract at residues 79–125 is disordered; it reads KQQKEEREKRRRSFHERMSQNQSEDEEFKKQMSSILKRVQSVKRTEK.

In terms of tissue distribution, expressed in many epithelial tissues, including the pharynx, intestine, excretory canal and hypodermis.

It is found in the cell junction. Its subcellular location is the cytoplasm. The protein resides in the cytoskeleton. In terms of biological role, dynamic component of the endotube in intestinal cells, interacts with intermediate filament and regulates intestinal lumen morphology. The protein is Bublin coiled-coil protein of Caenorhabditis elegans.